The primary structure comprises 860 residues: Leucine--tRNA ligase (860 aa).

A 'HIGH' region motif is present at residues 42 to 52 (PYPSGRLHMGH). A 'KMSKS' region motif is present at residues 619-623 (KMSKS). Lysine 622 lines the ATP pocket.

The protein belongs to the class-I aminoacyl-tRNA synthetase family.

It is found in the cytoplasm. It carries out the reaction tRNA(Leu) + L-leucine + ATP = L-leucyl-tRNA(Leu) + AMP + diphosphate. This chain is Leucine--tRNA ligase, found in Shigella dysenteriae serotype 1 (strain Sd197).